The chain runs to 137 residues: Large ribosomal subunit protein uL14 (137 aa).

This sequence belongs to the universal ribosomal protein uL14 family. In terms of assembly, part of the 50S ribosomal subunit. Forms a cluster with proteins L3 and L24e, part of which may contact the 16S rRNA in 2 intersubunit bridges.

Binds to 23S rRNA. Forms part of two intersubunit bridges in the 70S ribosome. The chain is Large ribosomal subunit protein uL14 from Ignicoccus hospitalis (strain KIN4/I / DSM 18386 / JCM 14125).